Consider the following 489-residue polypeptide: UDP-N-acetylmuramoylalanine--D-glutamate ligase (489 aa).

126–132 contacts ATP; the sequence is GTNGKTT.

It belongs to the MurCDEF family.

It is found in the cytoplasm. It carries out the reaction UDP-N-acetyl-alpha-D-muramoyl-L-alanine + D-glutamate + ATP = UDP-N-acetyl-alpha-D-muramoyl-L-alanyl-D-glutamate + ADP + phosphate + H(+). It participates in cell wall biogenesis; peptidoglycan biosynthesis. In terms of biological role, cell wall formation. Catalyzes the addition of glutamate to the nucleotide precursor UDP-N-acetylmuramoyl-L-alanine (UMA). This chain is UDP-N-acetylmuramoylalanine--D-glutamate ligase, found in Mycobacterium avium (strain 104).